The sequence spans 503 residues: Palmitoleoyl-protein carboxylesterase NOTUM (503 aa).

An N-terminal signal peptide occupies residues 1–19; the sequence is MGGEVRVLLLLGLLHWVGG. The interval 23 to 53 is disordered; the sequence is RKTWRRRGQQPPQPPPPPPLPQRAEVEPGAG. The span at 33 to 43 shows a compositional bias: pro residues; the sequence is PPQPPPPPPLP. Phosphoserine is present on serine 88. Residue asparagine 103 is glycosylated (N-linked (GlcNAc...) asparagine). Residues serine 239, aspartate 347, and histidine 396 each act as charge relay system in the active site.

Belongs to the pectinacetylesterase family. Notum subfamily. In terms of tissue distribution, widely expressed. Expressed in lung, ovary, kidney, liver and brain. Not detected in thymus, heart, spleen, stomach, skeletal muscle and bone marrow.

The protein resides in the secreted. The catalysed reaction is [Wnt protein]-O-(9Z)-hexadecenoyl-L-serine + H2O = [Wnt protein]-L-serine + (9Z)-hexadecenoate + H(+). Functionally, carboxylesterase that acts as a key negative regulator of the Wnt signaling pathway by specifically mediating depalmitoleoylation of WNT proteins. Serine palmitoleoylation of WNT proteins is required for efficient binding to frizzled receptors. The protein is Palmitoleoyl-protein carboxylesterase NOTUM of Mus musculus (Mouse).